Reading from the N-terminus, the 177-residue chain is Dihydrofolate reductase type 9 (177 aa).

The region spanning 3 to 167 (SLNMIVAVNK…TKLIFQIWIN (165 aa)) is the DHFR domain.

The protein belongs to the dihydrofolate reductase family. Homodimer.

It carries out the reaction (6S)-5,6,7,8-tetrahydrofolate + NADP(+) = 7,8-dihydrofolate + NADPH + H(+). It functions in the pathway cofactor biosynthesis; tetrahydrofolate biosynthesis; 5,6,7,8-tetrahydrofolate from 7,8-dihydrofolate: step 1/1. In terms of biological role, key enzyme in folate metabolism. Catalyzes an essential reaction for de novo glycine and purine synthesis, and for DNA precursor synthesis. This is Dihydrofolate reductase type 9 (dhfrIX) from Escherichia coli.